We begin with the raw amino-acid sequence, 301 residues long: NAD kinase (301 aa).

The Proton acceptor role is filled by Asp-73. NAD(+) contacts are provided by residues 73-74, 151-152, Arg-179, Asp-181, 192-197, Ala-216, and Gln-250; these read DG, ND, and TAYALS.

Belongs to the NAD kinase family. The cofactor is a divalent metal cation.

It is found in the cytoplasm. It catalyses the reaction NAD(+) + ATP = ADP + NADP(+) + H(+). Functionally, involved in the regulation of the intracellular balance of NAD and NADP, and is a key enzyme in the biosynthesis of NADP. Catalyzes specifically the phosphorylation on 2'-hydroxyl of the adenosine moiety of NAD to yield NADP. The polypeptide is NAD kinase (Methylibium petroleiphilum (strain ATCC BAA-1232 / LMG 22953 / PM1)).